The primary structure comprises 317 residues: Ribonuclease H2 subunit A (317 aa).

The region spanning 43–270 (PCCLGVDEAG…AKDMLETKGG (228 aa)) is the RNase H type-2 domain. Asp49, Glu50, and Asp166 together coordinate a divalent metal cation.

This sequence belongs to the RNase HII family. Eukaryotic subfamily. The cofactor is Mn(2+). It depends on Mg(2+) as a cofactor.

It carries out the reaction Endonucleolytic cleavage to 5'-phosphomonoester.. Its function is as follows. Endonuclease that specifically degrades the RNA of RNA-DNA hybrids. Participates in DNA replication. The protein is Ribonuclease H2 subunit A (rnh-201) of Neurospora crassa (strain ATCC 24698 / 74-OR23-1A / CBS 708.71 / DSM 1257 / FGSC 987).